The primary structure comprises 380 residues: Homeobox protein ceh-6 (380 aa).

Positions 1 to 25 are enriched in low complexity; the sequence is MLIPSSSSIPSSLSASASDSEPSSL. Disordered regions lie at residues 1–31, 167–190, and 265–286; these read MLIPSSSSIPSSLSASASDSEPSSLNGSGIS, SGSVSGAGGPHQPLSDISDDSEQT, and GSPNSTFEKMTGQAGRKRKKRT. The POU-specific domain occupies 187–261; that stretch reads SEQTCPDDLE…LLFKWLEEAD (75 aa). The segment at residues 281–340 is a DNA-binding region (homeobox); the sequence is KRKKRTSIEVNVKSRLEFHFQSNQKPNAQEITQVAMELQLEKEVVRVWFCNRRQKEKRIA.

The protein belongs to the POU transcription factor family. Class-3 subfamily. Interacts with egl-27, sox-2 and sem-4. Interacts with wdr-5.1. Expressed in a series of neurons in the ring ganglia, excretory cell, dividing neuroblasts in the ventral cord and rectal cells.

The protein localises to the nucleus. Its function is as follows. Vital for embryonic development and essential for the proper function of the excretory cell. Required for the transdifferentiation of the Y rectal epithelial cell to the PDA motor neuron during larval development. This Caenorhabditis elegans protein is Homeobox protein ceh-6.